The following is a 278-amino-acid chain: MEMLEEHRCFEGWQQRWRHDSSTLNCPMTFSIFLPPPRDHTPPPVLYWLSGLTCNDENFTTKAGAQRVAAELGIVLVMPDTSPRGEKVANDDGYDLGQGAGFYLNATQPPWATHYRMYDYLRDELPALVQSQFNVSDRCAISGHSMGGHGALIMALKNPGKYTSVSAFAPIVNPCSVPWGIKAFSRYLGEDKNAWLEWDSCALMYASNAQDAIPTLIDQGDNDQFLADQLQPAVLAEAARQKAWPMTLRIQPGYDHSYYFIASFIEDHLRFHAQYLLK.

Active-site charge relay system residues include Ser-145, Asp-223, and His-256.

The protein belongs to the esterase D family.

It carries out the reaction S-formylglutathione + H2O = formate + glutathione + H(+). Serine hydrolase involved in the detoxification of formaldehyde. Hydrolyzes S-formylglutathione to glutathione and formate. The chain is S-formylglutathione hydrolase YeiG (yeiG) from Escherichia coli O157:H7.